The following is a 419-amino-acid chain: Zinc finger protein Pegasus (419 aa).

3 consecutive C2H2-type zinc fingers follow at residues 79-101 (LKCR…IRIH), 107-129 (HRCH…MRSH), and 135-158 (YKCE…RRRH). Disordered regions lie at residues 203–255 (LQKP…DQDM) and 310–360 (SVNT…TPVQ). Positions 208-228 (SEQHHLGDFTHDLPPHAHLHQ) are enriched in basic and acidic residues. Polar residues-rich tracts occupy residues 310–320 (SVNTAQASSPI) and 341–360 (ERTS…TPVQ). 2 C2H2-type zinc fingers span residues 366 to 388 (HHCP…MGCH) and 394 to 418 (FQCN…RGQH).

This sequence belongs to the Ikaros C2H2-type zinc-finger protein family. In terms of assembly, probably self-associates.

It localises to the nucleus. Transcriptional repressor that binds the core 5'GNNTGTNG-3' DNA consensus sequence. The sequence is that of Zinc finger protein Pegasus (ikzf5) from Danio rerio (Zebrafish).